We begin with the raw amino-acid sequence, 308 residues long: Mitoferrin (308 aa).

The next 6 membrane-spanning stretches (helical) occupy residues 13-29, 69-89, 111-131, 168-184, 213-233, and 285-302; these read GGSF…AGFA, ITGL…SHAV, IKVG…ASPM, YTTT…VYFA, LVAG…FDVV, and MVFH…YEYF. Solcar repeat units lie at residues 14–100, 108–192, and 207–305; these read GSFY…LKFK, HHPI…LKKI, and YQLI…FKFI.

This sequence belongs to the mitochondrial carrier (TC 2.A.29) family.

Its subcellular location is the mitochondrion inner membrane. Its function is as follows. Mitochondrial solute carriers shuttle metabolites, nucleotides, and cofactors through the mitochondrial inner membrane. Mitochondrial iron transporter that mediates iron uptake. Probably required for heme synthesis of hemoproteins and Fe-S cluster assembly. The chain is Mitoferrin (mcfF) from Dictyostelium discoideum (Social amoeba).